The following is a 158-amino-acid chain: MKLNEIKDNEGSTHSRKRLGRGIGSGSGKTGGRGVKGQKSRSGVAINGFEGGQMPIYRRLPKRGFNNIFASDFVVVSLARIQAAIDAGKLDAKATVDAAALKAAGVIRRAKDGVRVLADGELKAKITIVVAGASKPAVEKIEKAGGSVTLLSAPAAAE.

A compositionally biased stretch (basic and acidic residues) spans 1-13 (MKLNEIKDNEGST). The interval 1 to 45 (MKLNEIKDNEGSTHSRKRLGRGIGSGSGKTGGRGVKGQKSRSGVA) is disordered. A compositionally biased stretch (gly residues) spans 21–35 (RGIGSGSGKTGGRGV).

The protein belongs to the universal ribosomal protein uL15 family. Part of the 50S ribosomal subunit.

In terms of biological role, binds to the 23S rRNA. This is Large ribosomal subunit protein uL15 from Rhizobium etli (strain CIAT 652).